The following is a 144-amino-acid chain: Prefoldin subunit alpha (144 aa).

Belongs to the prefoldin alpha subunit family. As to quaternary structure, heterohexamer of two alpha and four beta subunits.

It localises to the cytoplasm. In terms of biological role, molecular chaperone capable of stabilizing a range of proteins. Seems to fulfill an ATP-independent, HSP70-like function in archaeal de novo protein folding. The chain is Prefoldin subunit alpha from Methanococcus maripaludis (strain C7 / ATCC BAA-1331).